The following is a 1015-amino-acid chain: Putative helicase mov-10-B.2 (1015 aa).

The tract at residues 94 to 130 is disordered; the sequence is QWFRPRRRQQNQANATPGNVSSVTPSSDQGPSCPESG. Positions 109-123 are enriched in polar residues; the sequence is TPGNVSSVTPSSDQG. 555–562 serves as a coordination point for ATP; the sequence is GPPGTGKT. Positions 677–680 match the DEAG box motif; that stretch reads DEAG.

The protein belongs to the DNA2/NAM7 helicase family. SDE3 subfamily.

Its subcellular location is the cytoplasm. It localises to the P-body. It carries out the reaction ATP + H2O = ADP + phosphate + H(+). Functionally, probable RNA helicase. Required for RNA-mediated gene silencing by the RNA-induced silencing complex (RISC). Required for both miRNA-mediated translational repression and miRNA-mediated cleavage of complementary mRNAs by RISC. The sequence is that of Putative helicase mov-10-B.2 (mov10b.2) from Danio rerio (Zebrafish).